A 356-amino-acid chain; its full sequence is Nicotinate-nucleotide--dimethylbenzimidazole phosphoribosyltransferase (356 aa).

Glutamate 317 (proton acceptor) is an active-site residue.

This sequence belongs to the CobT family. Homodimer.

The catalysed reaction is 5,6-dimethylbenzimidazole + nicotinate beta-D-ribonucleotide = alpha-ribazole 5'-phosphate + nicotinate + H(+). The protein operates within nucleoside biosynthesis; alpha-ribazole biosynthesis; alpha-ribazole from 5,6-dimethylbenzimidazole: step 1/2. Its function is as follows. Catalyzes the synthesis of alpha-ribazole-5'-phosphate from nicotinate mononucleotide (NAMN) and 5,6-dimethylbenzimidazole (DMB). This chain is Nicotinate-nucleotide--dimethylbenzimidazole phosphoribosyltransferase, found in Salmonella typhi.